A 453-amino-acid polypeptide reads, in one-letter code: Protein FAM222A (453 aa).

The protein belongs to the FAM222 family.

The sequence is that of Protein FAM222A (Fam222a) from Mus musculus (Mouse).